A 792-amino-acid polypeptide reads, in one-letter code: MDPRVAWIQPEQKGPANALWMQIWETSQGVGRGGSGFASYFCLNSPALDTAAAAGAAGRGSGGLGPALPAASPPPPGPTAPAALPPALLTALGPAAEGARRLHKSPSLSSSSSSSSSNAESGTESPGCSSSSSSSASLGRPGGGRGGAFFNFADGAPSAPGTANGHPGPRGPAPAGSPSQHQFHPGRRKRENKASTYGLNYLLSGSRAAALSGGGGPGAQAPRPGTPWKSRAYSPGIQGLHEEIIDFYNFMSPCPEEAAMRREVVKRIETVVKDLWPTADVQIFGSFSTGLYLPTSDIDLVVFGKWERPPLQLLEQALRKHNVAEPCSIKVLDKATVPIIKLTDQETEVKVDISFNMETGVRAAEFIKNYMKKYSLLPYLILVLKQFLLQRDLNEVFTGGISSYSLILMAISFLQLHPRIDARRADENLGMLLVEFFELYGRNFNYLKTGIRIKEGGAYIAKEEIMKAMTSGYRPSMLCIEDPLLPGNDVGRSSYGAMQVKQVFDYAYIVLSHAVSPLARSYPNRDAESTLGRIIKVTQEVIDYRRWIKEKWGSKAHPSPGMDSRIKIKERIATCNGEQTQNREPESPYGQRLTLSLSSPQLLSSGSSASSVSSLSGSDVDSDTPPCTTPSVYQFSLQAPAPLMAGLPTALPMPSGKPQPTTSRTLIMTTNNQTRFTIPPPTLGVAPVPCRQAGVEGTASLKAVHHMSSPAIPSASPNPLSSPHLYHKQHNGMKLSMKGSHGHTQGGGYSSVGSGGVRPPVGNRGHHQYNRTGWRRKKHTHTRDSLPVSLSR.

The disordered stretch occupies residues 55 to 191; it reads GAAGRGSGGL…QFHPGRRKRE (137 aa). 2 stretches are compositionally biased toward low complexity: residues 80 to 97 and 105 to 139; these read APAA…PAAE and SPSL…ASLG. 2 residues coordinate Mg(2+): Asp297 and Asp299. Residues Gly360, Lys385, Ser403, and Tyr404 each coordinate ATP. The PAP-associated domain maps to 428 to 486; it reads NLGMLLVEFFELYGRNFNYLKTGIRIKEGGAYIAKEEIMKAMTSGYRPSMLCIEDPLLP. Residues Asn488 and Arg492 each contribute to the ATP site. Low complexity predominate over residues 601-619; the sequence is QLLSSGSSASSVSSLSGSD. Disordered regions lie at residues 601 to 632 and 737 to 792; these read QLLS…TPSV and MKGS…SLSR. A compositionally biased stretch (gly residues) spans 744–756; it reads TQGGGYSSVGSGG. The span at 764–781 shows a compositional bias: basic residues; it reads RGHHQYNRTGWRRKKHTH.

It belongs to the DNA polymerase type-B-like family. Component of a nuclear TRAMP-like complex, an ATP-dependent exosome regulatory complex consisting of a helicase (MTREX), an oligadenylate polymerase (TENT4B or TENT4A), and a substrate specific RNA-binding factor (ZCCHC7 or ZCCHC8). Several TRAMP-like complexes exist with specific compositions and are associated with nuclear, or nucleolar RNA exosomes. Mg(2+) is required as a cofactor. Mn(2+) serves as cofactor.

It localises to the cytoplasm. The protein resides in the nucleus. It is found in the nucleoplasm. The enzyme catalyses RNA(n) + ATP = RNA(n)-3'-adenine ribonucleotide + diphosphate. Terminal nucleotidyltransferase that catalyzes preferentially the transfer of ATP and GTP on RNA 3' poly(A) tail creating a heterogeneous 3' poly(A) tail leading to mRNAs stabilization by protecting mRNAs from active deadenylation. Also functions as a catalytic subunit of a TRAMP-like complex which has a poly(A) RNA polymerase activity and is involved in a post-transcriptional quality control mechanism. Polyadenylation with short oligo(A) tails is required for the degradative activity of the exosome on several of its nuclear RNA substrates. Has no terminal uridylyltransferase activity, and does not play a role in replication-dependent histone mRNA degradation via uridylation. The sequence is that of Terminal nucleotidyltransferase 4A from Homo sapiens (Human).